The sequence spans 804 residues: Elongation factor G, mitochondrial (804 aa).

A mitochondrion-targeting transit peptide spans 1–9 (MVRPAQVRA). Positions 103–389 (SKVRNIGIAA…GVCDYLPNPS (287 aa)) constitute a tr-type G domain. GTP contacts are provided by residues 112 to 119 (AHIDSGKT), 187 to 191 (DTPGH), and 241 to 244 (NKMD).

It belongs to the TRAFAC class translation factor GTPase superfamily. Classic translation factor GTPase family. EF-G/EF-2 subfamily.

The protein localises to the mitochondrion. The protein operates within protein biosynthesis; polypeptide chain elongation. Mitochondrial GTPase that catalyzes the GTP-dependent ribosomal translocation step during translation elongation. During this step, the ribosome changes from the pre-translocational (PRE) to the post-translocational (POST) state as the newly formed A-site-bound peptidyl-tRNA and P-site-bound deacylated tRNA move to the P and E sites, respectively. Catalyzes the coordinated movement of the two tRNA molecules, the mRNA and conformational changes in the ribosome. This chain is Elongation factor G, mitochondrial (mef1), found in Talaromyces stipitatus (strain ATCC 10500 / CBS 375.48 / QM 6759 / NRRL 1006) (Penicillium stipitatum).